The primary structure comprises 359 residues: Peptide chain release factor 1 (359 aa).

Gln235 is modified (N5-methylglutamine). A compositionally biased stretch (basic and acidic residues) spans Arg282–Arg307. Residues Arg282–Tyr309 are disordered.

This sequence belongs to the prokaryotic/mitochondrial release factor family. In terms of processing, methylated by PrmC. Methylation increases the termination efficiency of RF1.

Its subcellular location is the cytoplasm. In terms of biological role, peptide chain release factor 1 directs the termination of translation in response to the peptide chain termination codons UAG and UAA. The protein is Peptide chain release factor 1 of Allorhizobium ampelinum (strain ATCC BAA-846 / DSM 112012 / S4) (Agrobacterium vitis (strain S4)).